Consider the following 398-residue polypeptide: 1-deoxy-D-xylulose 5-phosphate reductoisomerase (398 aa).

Residues Thr10, Gly11, Ser12, Ile13, Asn38, and Asn124 each coordinate NADPH. Lys125 serves as a coordination point for 1-deoxy-D-xylulose 5-phosphate. Glu126 lines the NADPH pocket. Asp150 contacts Mn(2+). Positions 151, 152, 176, and 199 each coordinate 1-deoxy-D-xylulose 5-phosphate. Residue Glu152 participates in Mn(2+) binding. Gly205 is an NADPH binding site. 1-deoxy-D-xylulose 5-phosphate-binding residues include Ser212, Asn217, Lys218, and Glu221. Mn(2+) is bound at residue Glu221.

It belongs to the DXR family. Mg(2+) is required as a cofactor. The cofactor is Mn(2+).

The catalysed reaction is 2-C-methyl-D-erythritol 4-phosphate + NADP(+) = 1-deoxy-D-xylulose 5-phosphate + NADPH + H(+). It functions in the pathway isoprenoid biosynthesis; isopentenyl diphosphate biosynthesis via DXP pathway; isopentenyl diphosphate from 1-deoxy-D-xylulose 5-phosphate: step 1/6. Catalyzes the NADPH-dependent rearrangement and reduction of 1-deoxy-D-xylulose-5-phosphate (DXP) to 2-C-methyl-D-erythritol 4-phosphate (MEP). The protein is 1-deoxy-D-xylulose 5-phosphate reductoisomerase of Crocosphaera subtropica (strain ATCC 51142 / BH68) (Cyanothece sp. (strain ATCC 51142)).